The following is a 475-amino-acid chain: Ribulose bisphosphate carboxylase large chain (475 aa).

The propeptide occupies 1-2 (MS). Proline 3 carries the post-translational modification N-acetylproline. Lysine 14 carries the N6,N6,N6-trimethyllysine modification. The substrate site is built by asparagine 123 and threonine 173. Lysine 175 functions as the Proton acceptor in the catalytic mechanism. Lysine 177 lines the substrate pocket. Lysine 201, aspartate 203, and glutamate 204 together coordinate Mg(2+). At lysine 201 the chain carries N6-carboxylysine. Histidine 294 acts as the Proton acceptor in catalysis. Residues arginine 295, histidine 327, and serine 379 each contribute to the substrate site.

This sequence belongs to the RuBisCO large chain family. Type I subfamily. In terms of assembly, heterohexadecamer of 8 large chains and 8 small chains; disulfide-linked. The disulfide link is formed within the large subunit homodimers. It depends on Mg(2+) as a cofactor. The disulfide bond which can form in the large chain dimeric partners within the hexadecamer appears to be associated with oxidative stress and protein turnover.

The protein resides in the plastid. It is found in the chloroplast. The catalysed reaction is 2 (2R)-3-phosphoglycerate + 2 H(+) = D-ribulose 1,5-bisphosphate + CO2 + H2O. It carries out the reaction D-ribulose 1,5-bisphosphate + O2 = 2-phosphoglycolate + (2R)-3-phosphoglycerate + 2 H(+). In terms of biological role, ruBisCO catalyzes two reactions: the carboxylation of D-ribulose 1,5-bisphosphate, the primary event in carbon dioxide fixation, as well as the oxidative fragmentation of the pentose substrate in the photorespiration process. Both reactions occur simultaneously and in competition at the same active site. This is Ribulose bisphosphate carboxylase large chain from Larix occidentalis (Western larch).